The primary structure comprises 511 residues: Acidic amino acid decarboxylase GADL1 (511 aa).

N6-(pyridoxal phosphate)lysine is present on K323.

This sequence belongs to the group II decarboxylase family. In terms of assembly, homodimer. Pyridoxal 5'-phosphate is required as a cofactor.

The enzyme catalyses L-aspartate + H(+) = beta-alanine + CO2. It catalyses the reaction 3-sulfino-L-alanine + H(+) = hypotaurine + CO2. Its function is as follows. Catalyzes the decarboxylation of L-aspartate, 3-sulfino-L-alanine (cysteine sulfinic acid), and L-cysteate to beta-alanine, hypotaurine and taurine, respectively. The preferred substrate is L-aspartate. Does not exhibit any decarboxylation activity toward glutamate. In Xenopus tropicalis (Western clawed frog), this protein is Acidic amino acid decarboxylase GADL1 (gadl1).